The chain runs to 206 residues: Urease accessory protein UreG (206 aa).

14-21 (GPVGSGKT) is a binding site for GTP.

Belongs to the SIMIBI class G3E GTPase family. UreG subfamily. As to quaternary structure, homodimer. UreD, UreF and UreG form a complex that acts as a GTP-hydrolysis-dependent molecular chaperone, activating the urease apoprotein by helping to assemble the nickel containing metallocenter of UreC. The UreE protein probably delivers the nickel.

The protein localises to the cytoplasm. Functionally, facilitates the functional incorporation of the urease nickel metallocenter. This process requires GTP hydrolysis, probably effectuated by UreG. This is Urease accessory protein UreG from Aliivibrio fischeri (strain ATCC 700601 / ES114) (Vibrio fischeri).